Here is a 72-residue protein sequence, read N- to C-terminus: Cell division protein ZapB (72 aa).

Residues 5 to 71 (ILDQLEEKIK…LRSLLGQIDN (67 aa)) are a coiled coil.

This sequence belongs to the ZapB family. In terms of assembly, homodimer. The ends of the coiled-coil dimer bind to each other, forming polymers. Interacts with FtsZ.

Its subcellular location is the cytoplasm. Functionally, non-essential, abundant cell division factor that is required for proper Z-ring formation. It is recruited early to the divisome by direct interaction with FtsZ, stimulating Z-ring assembly and thereby promoting cell division earlier in the cell cycle. Its recruitment to the Z-ring requires functional FtsA or ZipA. The polypeptide is Cell division protein ZapB (Actinobacillus pleuropneumoniae serotype 5b (strain L20)).